We begin with the raw amino-acid sequence, 403 residues long: Tubby-like F-box protein 6 (403 aa).

The F-box domain maps to 50–105; that stretch reads SCWAQLPPELLREVLVRIEESEVWWPSRRDVVACAGVCRSWRGITKEIVRVPEASG.

Belongs to the TUB family. As to expression, ubiquitous.

This chain is Tubby-like F-box protein 6 (TULP6), found in Oryza sativa subsp. japonica (Rice).